A 252-amino-acid polypeptide reads, in one-letter code: Imidazole glycerol phosphate synthase subunit HisF (252 aa).

Catalysis depends on residues Asp11 and Asp130.

It belongs to the HisA/HisF family. In terms of assembly, heterodimer of HisH and HisF.

It localises to the cytoplasm. It catalyses the reaction 5-[(5-phospho-1-deoxy-D-ribulos-1-ylimino)methylamino]-1-(5-phospho-beta-D-ribosyl)imidazole-4-carboxamide + L-glutamine = D-erythro-1-(imidazol-4-yl)glycerol 3-phosphate + 5-amino-1-(5-phospho-beta-D-ribosyl)imidazole-4-carboxamide + L-glutamate + H(+). The protein operates within amino-acid biosynthesis; L-histidine biosynthesis; L-histidine from 5-phospho-alpha-D-ribose 1-diphosphate: step 5/9. IGPS catalyzes the conversion of PRFAR and glutamine to IGP, AICAR and glutamate. The HisF subunit catalyzes the cyclization activity that produces IGP and AICAR from PRFAR using the ammonia provided by the HisH subunit. The sequence is that of Imidazole glycerol phosphate synthase subunit HisF from Syntrophomonas wolfei subsp. wolfei (strain DSM 2245B / Goettingen).